The chain runs to 96 residues: Integration host factor subunit beta (96 aa).

The interval 59-78 is disordered; it reads RVGRNPKTGETVSLPGKYVP.

This sequence belongs to the bacterial histone-like protein family. Heterodimer of an alpha and a beta chain.

Its function is as follows. This protein is one of the two subunits of integration host factor, a specific DNA-binding protein that functions in genetic recombination as well as in transcriptional and translational control. The protein is Integration host factor subunit beta of Thioalkalivibrio sulfidiphilus (strain HL-EbGR7).